The following is a 388-amino-acid chain: Glucose-6-phosphate/phosphate translocator 2, chloroplastic (388 aa).

The N-terminal 68 residues, 1–68, are a transit peptide targeting the chloroplast; sequence MLSSIKPSSS…SASNFKREVK (68 aa). Transmembrane regions (helical) follow at residues 95-115, 122-142, 158-178, 211-231, 233-253, 281-301, 305-325, and 358-378; these read LKIG…NIYN, FPYP…MMLV, FWKT…AATV, FPLP…LAAI, ELNF…AFVF, LVIL…AAGW, VSQV…FYHL, and IIIF…IAIF. Residues 113-231 form the EamA domain; sequence IYNKKVLNAF…IIGGCALAAI (119 aa).

Belongs to the TPT transporter family. GPT (TC 2.A.7.9) subfamily. In terms of tissue distribution, expressed in seeds, flowers, stamens, and rosette leaves, with highest levels found in sepals and senescing leaves.

It is found in the plastid. The protein localises to the chloroplast membrane. Its function is as follows. Glucose 6-phosphate (Glc6P) transporter. Also transports inorganic phosphate, 3-phosphoglycerate, triose phosphates and, to a leser extent, phosphoenolpyruvate. Responsible for the transport of Glc6P into plastids of heterotrophic tissues where it can be used as a carbon source for starch biosynthesis, as substrate for fatty acid biosynthesis or as substrate for NADPH generation via the oxidative pentose phosphate pathway (OPPP). Required for dynamic acclimation of photosynthesis and partitioning of Glc6P between the chloroplast and the cytosol. May modulate the sensing of sugar status during early seedling development. This is Glucose-6-phosphate/phosphate translocator 2, chloroplastic from Arabidopsis thaliana (Mouse-ear cress).